The chain runs to 270 residues: Putative phosphoenolpyruvate synthase regulatory protein (270 aa).

150–157 is a binding site for ADP; the sequence is GVSRCGKT.

It belongs to the pyruvate, phosphate/water dikinase regulatory protein family. PSRP subfamily.

The catalysed reaction is [pyruvate, water dikinase] + ADP = [pyruvate, water dikinase]-phosphate + AMP + H(+). It carries out the reaction [pyruvate, water dikinase]-phosphate + phosphate + H(+) = [pyruvate, water dikinase] + diphosphate. Bifunctional serine/threonine kinase and phosphorylase involved in the regulation of the phosphoenolpyruvate synthase (PEPS) by catalyzing its phosphorylation/dephosphorylation. The polypeptide is Putative phosphoenolpyruvate synthase regulatory protein (Shewanella loihica (strain ATCC BAA-1088 / PV-4)).